The following is a 1040-amino-acid chain: MQVLPPSSTGGPSRLFIMRPVATTLLMVAILLAGIIGYRALPVSALPEVDYPTIQVVTLYPGASPDVMTSAVTAPLERQFGQMSGLKQMSSQSSGGASVITLQFQLTLPLDVAEQEVQAAINAATNLLPSDLPNPPVYSKVNPADPPIMTLAVTSTAMPMTQVEDMVETRVAQKISQISGVGLVTLSGGQRPAVRVKLNAQAIAALGLTSETVRTAITGANVNSAKGSLDGPSRAVTLSANDQMQSAEEYRQLIIAYQNGAPIRLGDVATVEQGAENSWLGAWANKEQAIVMNVQRQPGANIISTADSIRQMLPQLTESLPKSVKVTVLSDRTTNIRASVDDTQFELMMAIALVVMIIYLFLRNIPATIIPGVAVPLSLIGTFAVMVFLDFSINNLTLMALTIATGFVVDDAIVVIENISRYIEKGEKPLAAALKGAGEIGFTIISLIFSLIAVLIPLLFMGDIVGRLFREFAITLAVAILISAVVSLTLTPMMCARMLSQESLRKQNRFSRASEKMFDRIIAAYGRGLAKVLNHPWLTLSVALSTLLLSVLLWVFIPKGFFPVQDNGIIQGTLQAPQSSSFANMAQRQRQVADVILQDPAVQSLTSFVGVDGTNPSLNSARLQINLKPLDERDDRVQKVIARLQTAVDKVPGVDLFLQPTQDLTIDTQVSRTQYQFTLQATSLDALSTWVPQLMEKLQQLPQLSDVSSDWQDKGLVAYVNVDRDSASRLGISMADVDNALYSAFGQRLISTIYTQANQYRVVLEHNTEITPGLAALDTIRLTSSDGGVVPLSSIAKVEQRFAPLSINHLDQFPVTTISFNVPDNYSLGDAVQAIMDTEKTLNLPVDITTQFQGSTLAFQSALGSTVWLIVAAVVAMYIVLGILYESFIHPITILSTLPTAGVGALLALMIAGSELDVIAIIGIILLIGIVKKNAIMMIDFALAAEREQGMSPRDAIYQACLLRFRPILMTTLAALLGALPLMLSTGVGAELRRPLGIGMVGGLIVSQVLTLFTTPVIYLLFDRLALWTKSRFARHEEEA.

Transmembrane regions (helical) follow at residues 16–36 (FIMR…AGII), 347–367 (LMMA…NIPA), 369–389 (IIPG…MVFL), 396–416 (LTLM…IVVI), 440–460 (IGFT…PLLF), 472–492 (FAIT…TLTP), 537–557 (WLTL…WVFI), 863–883 (LGST…VLGI), 888–908 (FIHP…ALLA), 911–931 (IAGS…IGIV), 968–988 (ILMT…STGV), and 998–1018 (IGMV…TPVI).

It belongs to the resistance-nodulation-cell division (RND) (TC 2.A.6) family. MdtB subfamily. In terms of assembly, part of a tripartite efflux system composed of MdtA, MdtB and MdtC. MdtB forms a heteromultimer with MdtC.

It is found in the cell inner membrane. The polypeptide is Multidrug resistance protein MdtB (Shigella boydii serotype 4 (strain Sb227)).